Consider the following 130-residue polypeptide: Large ribosomal subunit protein eL32 (130 aa).

This sequence belongs to the eukaryotic ribosomal protein eL32 family. Part of the 50S ribosomal subunit.

This is Large ribosomal subunit protein eL32 from Pyrococcus furiosus (strain ATCC 43587 / DSM 3638 / JCM 8422 / Vc1).